We begin with the raw amino-acid sequence, 1451 residues long: Dicer-like protein 2 (1451 aa).

Positions 34–53 (YDGHLSEEDSPGGKPRPKEQ) are disordered. The Helicase ATP-binding domain occupies 70 to 247 (MLEASLKENI…LKRLESTLDA (178 aa)). Position 83-90 (83-90 (MDTGSGKT)) interacts with ATP. Positions 190–193 (DEAH) match the DEAH box motif. The 171-residue stretch at 412 to 582 (KVQRIIEVLL…RLEAIENSEA (171 aa)) folds into the Helicase C-terminal domain. Residues 603–704 (AKSHLQHFVS…LPLRDRLELE (102 aa)) enclose the Dicer dsRNA-binding fold domain. 2 RNase III domains span residues 968-1111 (AAEL…VDGG) and 1153-1351 (LQLL…VDAG). Mg(2+) is bound at residue Glu-1192. A disordered region spans residues 1253–1272 (EGDSDSKSSGDSTSDKASPR). Positions 1337 and 1340 each coordinate Mg(2+).

This sequence belongs to the helicase family. Dicer subfamily. Mg(2+) serves as cofactor. Mn(2+) is required as a cofactor.

Functionally, dicer-like endonuclease involved in cleaving double-stranded RNA in the RNA interference (RNAi) pathway. Produces 21 to 25 bp dsRNAs (siRNAs) which target the selective destruction of homologous RNAs leading to sequence-specific suppression of gene expression, called post-transcriptional gene silencing (PTGS). Part of a broad host defense, DCL-2 is involved in antiviral defense against mycoviruses like the hypovirus CHV1-EP713 and the reovirus MyRV1-Cp9B21. This is Dicer-like protein 2 (DCL-2) from Cryphonectria parasitica (Chestnut blight fungus).